The chain runs to 240 residues: uncharacterized protein (240 aa).

Positions Gln-93 to Gln-160 are disordered. Low complexity-rich tracts occupy residues Ala-110–Gly-119 and Gly-129–Asn-150.

This is an uncharacterized protein from Streptomyces viridochromogenes.